A 365-amino-acid polypeptide reads, in one-letter code: Transcription factor TCP2 (365 aa).

Positions glycine 42–leucine 100 constitute a TCP domain. Over residues lysine 130 to arginine 150 the composition is skewed to low complexity. Disordered stretches follow at residues lysine 130 to serine 202 and glutamine 220 to histidine 245. A R domain is found at serine 151–arginine 172. The span at serine 151–histidine 176 shows a compositional bias: basic and acidic residues. Polar residues predominate over residues threonine 177–serine 202.

In terms of assembly, interacts with SPL. Interacts with CRY1. In terms of tissue distribution, expressed in cotyledons, particularly in the vascular region, in leaves, roots, buds, flowers and immature siliques.

Its subcellular location is the nucleus. In terms of biological role, plays a pivotal role in the control of morphogenesis of shoot organs by negatively regulating the expression of boundary-specific genes such as CUC genes, probably through the induction of miRNA (e.g. miR164). Participates in ovule development. Promotes light-regulated transcription of CHS, CAB, HYH and HY5. Positively regulates photomorphogenesis (e.g. hypocotyl elongation inhibition and cotyledon opening in response to blue light). This Arabidopsis thaliana (Mouse-ear cress) protein is Transcription factor TCP2.